Consider the following 39-residue polypeptide: Fructose 5-dehydrogenase [NADP(+)] (39 aa).

The catalysed reaction is D-fructose + NADP(+) = 5-dehydro-D-fructose + NADPH + H(+). This is Fructose 5-dehydrogenase [NADP(+)] from Erwinia citreus.